The sequence spans 348 residues: D-alanine--D-alanine ligase (348 aa).

In terms of domain architecture, ATP-grasp spans 132-334 (KRVLESIGIP…YPDLIEELVT (203 aa)). 162–217 (LARLTFPIFVKPANMGSSVGISKAQTKVELRKAIQLALTYDSRVLIEQGVIAREIE) is an ATP binding site. Mg(2+) is bound by residues aspartate 288, glutamate 301, and asparagine 303.

Belongs to the D-alanine--D-alanine ligase family. Mg(2+) is required as a cofactor. Requires Mn(2+) as cofactor.

Its subcellular location is the cytoplasm. It carries out the reaction 2 D-alanine + ATP = D-alanyl-D-alanine + ADP + phosphate + H(+). It participates in cell wall biogenesis; peptidoglycan biosynthesis. In terms of biological role, cell wall formation. The sequence is that of D-alanine--D-alanine ligase from Streptococcus pyogenes serotype M4 (strain MGAS10750).